A 427-amino-acid chain; its full sequence is Adenylosuccinate synthetase (427 aa).

Residues 12-18 and 40-42 each bind GTP; these read GDEGKGK and GHT. Residue Asp-13 is the Proton acceptor of the active site. Mg(2+) is bound by residues Asp-13 and Gly-40. Residues 13 to 16, 38 to 41, Thr-128, Arg-142, Gln-223, Thr-238, and Arg-302 contribute to the IMP site; these read DEGK and NAGH. The active-site Proton donor is His-41. 298–304 provides a ligand contact to substrate; that stretch reads TTTGRAR. Residues Arg-304, 330 to 332, and 412 to 414 contribute to the GTP site; these read KLD and AVG.

It belongs to the adenylosuccinate synthetase family. Homodimer. Requires Mg(2+) as cofactor.

Its subcellular location is the cytoplasm. The enzyme catalyses IMP + L-aspartate + GTP = N(6)-(1,2-dicarboxyethyl)-AMP + GDP + phosphate + 2 H(+). It functions in the pathway purine metabolism; AMP biosynthesis via de novo pathway; AMP from IMP: step 1/2. In terms of biological role, plays an important role in the de novo pathway of purine nucleotide biosynthesis. Catalyzes the first committed step in the biosynthesis of AMP from IMP. The sequence is that of Adenylosuccinate synthetase from Desulfitobacterium hafniense (strain DSM 10664 / DCB-2).